Here is a 1502-residue protein sequence, read N- to C-terminus: Ras guanine nucleotide exchange factor P (1502 aa).

Residues 84–187 enclose the Calponin-homology (CH) domain; that stretch reads FIIDNQVLDW…LLYSLMKFSE (104 aa). Disordered stretches follow at residues 216-242, 325-436, 456-534, and 589-935; these read AQSSSSSPTTSTSASTSTSTSPSSSNE, QQQQ…PNNN, EDNT…VGRG, and TTTA…NQNN. 4 stretches are compositionally biased toward low complexity: residues 218–242, 325–345, 371–400, and 407–421; these read SSSSSPTTSTSASTSTSTSPSSSNE, QQQQPPPQTSTCTTTQPTTTT, TTSSIIKKAAPAPLKKPSPANTSSNSLLNH, and SSSTASSAINTPIST. A coiled-coil region spans residues 287 to 328; sequence QQQQQQQQQQQQQQQQQQQQQQQQQQQQQQQQQQQQQQQQQQ. Residues 422–436 show a composition bias toward polar residues; the sequence is PSTSKSNSFQKPNNN. The stretch at 451 to 515 forms a coiled coil; the sequence is EENEIEDNTN…NQNENEDEVK (65 aa). Residues 458 to 508 show a composition bias toward low complexity; that stretch reads NTNNNNNNNNNNNNNNNNNNNNNNNNNNNNNNNNTNDNINNNNKNNNNNQN. A compositionally biased stretch (pro residues) spans 518-528; it reads HSPPKVRPPLP. Composition is skewed to low complexity over residues 589-646, 663-675, 686-719, 764-790, and 813-853; these read TTTA…NNNN, TISTSSPSTTGTI, SQPLNNNNNINNENNNSNNSNSLVTSSSPPLSLP, NSINQPPSNSSPKQSPVPNNPPSVSQS, and NSNS…NNNN. The span at 861–876 shows a compositional bias: polar residues; the sequence is LTMSNQSANSLKSSGN. The span at 883–935 shows a compositional bias: low complexity; that stretch reads TNGNNNISQNQNQNQNQNQNQTQNQNQNQNQNHISHSNSISSGNLNNHVNQNN. A coiled-coil region spans residues 1032–1076; it reads VEENKNLITRTEEMQKMIDSLMKEKKELINEKNTLASMLAKTKQQ. Positions 1102-1249 constitute an N-terminal Ras-GEF domain; the sequence is GKYEIKGGTT…SELKLVFSTP (148 aa). The region spanning 1267–1498 is the Ras-GEF domain; sequence DPAEIARQLT…FNLSLICEPR (232 aa).

Functionally, promotes the exchange of Ras-bound GDP by GTP. The protein is Ras guanine nucleotide exchange factor P (gefP) of Dictyostelium discoideum (Social amoeba).